Consider the following 198-residue polypeptide: Zinc finger protein 41 (198 aa).

Residues 1-12 (MEKPATRKKKSQ) show a composition bias toward basic residues. A disordered region spans residues 1-56 (MEKPATRKKKSQAPKEEAGAQKATVKGEKTSKGKKATKKPRKPRRPRKEPVLSPED). Over residues 13-31 (APKEEAGAQKATVKGEKTS) the composition is skewed to basic and acidic residues. A compositionally biased stretch (basic residues) spans 32-47 (KGKKATKKPRKPRRPR). 4 C2H2-type zinc fingers span residues 87–109 (YECGECGRIFKHKTDHIRHQRVH), 115–137 (FKCDQCGKTFRHSSDVTKHQRIH), 143–165 (FKCGECGKAFNCGSNLLKHQKTH), and 171–193 (YGCEECGKSFAYSSCLIRHRKRH).

Belongs to the krueppel C2H2-type zinc-finger protein family. Predominantly in the spermatocytes and spermatids of testes. It is also expressed in the fetus and embryonic stem cells at lower levels.

The protein resides in the nucleus. In terms of biological role, a putative DNA-binding regulatory protein associated with meiosis in spermatogenesis. The polypeptide is Zinc finger protein 41 (Zfp41) (Mus musculus (Mouse)).